The following is a 181-amino-acid chain: Ribonuclease HII (181 aa).

Residues 1-181 (MICGIDEVGR…SLHRKSFQLI (181 aa)) form the RNase H type-2 domain. Positions 6, 7, and 98 each coordinate a divalent metal cation.

The protein belongs to the RNase HII family. Mn(2+) serves as cofactor. The cofactor is Mg(2+).

The protein resides in the cytoplasm. The catalysed reaction is Endonucleolytic cleavage to 5'-phosphomonoester.. Its function is as follows. Endonuclease that specifically degrades the RNA of RNA-DNA hybrids. This is Ribonuclease HII from Borrelia duttonii (strain Ly).